The primary structure comprises 406 residues: CMP-sialic acid transporter 2 (406 aa).

The Cytoplasmic segment spans residues 1–41; that stretch reads MKNGMAECSVCRSRLVSPSSKAISRAYDNYNYKIRVSSKQR. A helical transmembrane segment spans residues 42-62; sequence ALNVFLVVGDCMLVGLQPVLV. Residues 63-75 lie on the Lumenal side of the membrane; the sequence is YMSKVDGKFNFSP. The helical transmembrane segment at 76-96 threads the bilayer; that stretch reads ISVNFLTEIAKVIFAMVMLLF. Over 97 to 148 the chain is Cytoplasmic; that stretch reads QARHQKVGEKPLLSLSTFVQAARNNMLLAVPAGLYAINNYLKFTMQLYFNPA. A helical transmembrane segment spans residues 149 to 169; it reads TVKMLSNLKVLVIAVLLKMIM. The Lumenal segment spans residues 170–172; sequence KRR. The chain crosses the membrane as a helical span at residues 173-193; that stretch reads FSIIQWEALALLLIGISINQL. Topologically, residues 194–201 are cytoplasmic; sequence RSLPEGAT. The helical transmembrane segment at 202–222 threads the bilayer; that stretch reads TVAVPIATGAYICTFIFVTVP. The Lumenal portion of the chain corresponds to 223 to 245; the sequence is SLASVYNEYALKSQYDTSIYLQN. A helical transmembrane segment spans residues 246–266; it reads LFLYGYGAIFNFLGILGTVIY. Topologically, residues 267 to 282 are cytoplasmic; that stretch reads KGPGSFDILQGHSRAT. The helical transmembrane segment at 283–303 threads the bilayer; the sequence is MFLILNNAAQGILSSFFFKYA. At 304-323 the chain is on the lumenal side; it reads DTILKKYSSTVATIFTGIAS. The chain crosses the membrane as a helical span at residues 324-344; it reads AALFGHILTMNFLLGISIVFI. The Cytoplasmic portion of the chain corresponds to 345 to 406; the sequence is SMHQFFSPLS…SDDRVPLLPR (62 aa).

The protein belongs to the nucleotide-sugar transporter family. CMP-Sialate:CMP antiporter (TC 2.A.7.12) subfamily.

The protein localises to the golgi apparatus membrane. Its function is as follows. Sugar transporter involved in the transport of CMP-sialic acid from the cytoplasm into the Golgi. This Arabidopsis thaliana (Mouse-ear cress) protein is CMP-sialic acid transporter 2.